A 575-amino-acid polypeptide reads, in one-letter code: Urease subunit alpha (575 aa).

Residues Gly137–Phe575 enclose the Urease domain. Ni(2+) contacts are provided by His142, His144, and Lys225. The residue at position 225 (Lys225) is an N6-carboxylysine. Residue His227 coordinates substrate. Ni(2+) is bound by residues His254 and His280. The Proton donor role is filled by His328. Ni(2+) is bound at residue Asp368.

The protein belongs to the metallo-dependent hydrolases superfamily. Urease alpha subunit family. In terms of assembly, heterotrimer of UreA (gamma), UreB (beta) and UreC (alpha) subunits. Three heterotrimers associate to form the active enzyme. The cofactor is Ni cation. Carboxylation allows a single lysine to coordinate two nickel ions.

Its subcellular location is the cytoplasm. The catalysed reaction is urea + 2 H2O + H(+) = hydrogencarbonate + 2 NH4(+). It functions in the pathway nitrogen metabolism; urea degradation; CO(2) and NH(3) from urea (urease route): step 1/1. The polypeptide is Urease subunit alpha (Leptothrix cholodnii (strain ATCC 51168 / LMG 8142 / SP-6) (Leptothrix discophora (strain SP-6))).